A 452-amino-acid chain; its full sequence is MELLKLNRSVQGPGPGSGSSLCRPGVSLLNSSSAGNLSCDPPRIRGTGTRELEMAIRITLYAVIFLMSVGGNVLIIVVLGLSRRLRTVTNAFLLSLAVSDLLLAVACMPFTLLPNLMGTFIFGTVICKAISYLMGVSVSVSTLNLVAIALERYSAICRPLQARVWQTRSHAARVILATWLLSGLLMVPYPVYTMVQPVGPRVLQCMHRWPSARVQQTWSVLLLLLLFFIPGVVIAVAYGLISRELYLGLHFDGENDSETQSRARNQGGLPGGAAPGPVHQNGGCRPVTSVAGEDSDGCCVQLPRSRLEMTTLTTPTPGPVPGPRPNQAKLLAKKRVVRMLLVIVLLFFLCWLPVYSVNTWRAFDGPGAQRALSGAPISFIHLLSYVSACVNPLVYCFMHRRFRQACLDTCARCCPRPPRARPQPLPDEDPPTPSIASLSRLSYTTISTLGPG.

The tract at residues 1-21 is disordered; the sequence is MELLKLNRSVQGPGPGSGSSL. Residues 1 to 57 are Extracellular-facing; sequence MELLKLNRSVQGPGPGSGSSLCRPGVSLLNSSSAGNLSCDPPRIRGTGTRELEMAIR. Residues N7, N30, and N36 are each glycosylated (N-linked (GlcNAc...) asparagine). Residues 58 to 79 traverse the membrane as a helical segment; the sequence is ITLYAVIFLMSVGGNVLIIVVL. Residues 80–87 are Cytoplasmic-facing; it reads GLSRRLRT. A helical membrane pass occupies residues 88 to 109; the sequence is VTNAFLLSLAVSDLLLAVACMP. At 110–131 the chain is on the extracellular side; sequence FTLLPNLMGTFIFGTVICKAIS. A disulfide bond links C127 and C205. The chain crosses the membrane as a helical span at residues 132-150; the sequence is YLMGVSVSVSTLNLVAIAL. Topologically, residues 151-170 are cytoplasmic; sequence ERYSAICRPLQARVWQTRSH. The helical transmembrane segment at 171-189 threads the bilayer; sequence AARVILATWLLSGLLMVPY. Residues 190-219 are Extracellular-facing; the sequence is PVYTMVQPVGPRVLQCMHRWPSARVQQTWS. Residues 220 to 242 traverse the membrane as a helical segment; sequence VLLLLLLFFIPGVVIAVAYGLIS. Residues 243–338 are Cytoplasmic-facing; the sequence is RELYLGLHFD…KLLAKKRVVR (96 aa). Residues 257–286 form a disordered region; that stretch reads SETQSRARNQGGLPGGAAPGPVHQNGGCRP. The helical transmembrane segment at 339-360 threads the bilayer; it reads MLLVIVLLFFLCWLPVYSVNTW. The Extracellular portion of the chain corresponds to 361–378; sequence RAFDGPGAQRALSGAPIS. The helical transmembrane segment at 379-399 threads the bilayer; sequence FIHLLSYVSACVNPLVYCFMH. Topologically, residues 400-452 are cytoplasmic; that stretch reads RRFRQACLDTCARCCPRPPRARPQPLPDEDPPTPSIASLSRLSYTTISTLGPG. The S-palmitoyl cysteine moiety is linked to residue C413. Residues 421-452 form a disordered region; the sequence is RPQPLPDEDPPTPSIASLSRLSYTTISTLGPG. Positions 434 to 452 are enriched in polar residues; that stretch reads SIASLSRLSYTTISTLGPG.

It belongs to the G-protein coupled receptor 1 family. As to expression, parietal cells, pancreas, brain and various neoplastic tissues.

Its subcellular location is the cell membrane. Functionally, receptor for gastrin and cholecystokinin. The CCK-B receptors occur throughout the central nervous system where they modulate anxiety, analgesia, arousal, and neuroleptic activity. This receptor mediates its action by association with G proteins that activate a phosphatidylinositol-calcium second messenger system. This Rattus norvegicus (Rat) protein is Gastrin/cholecystokinin type B receptor (Cckbr).